The following is a 1382-amino-acid chain: Suppressor of organelle fusion 2 (1382 aa).

The region spanning Arg-229–Arg-463 is the BEACH domain. WD repeat units lie at residues Gly-1094–Gly-1133 and Lys-1140–Gln-1176.

The protein belongs to the WD repeat WDR81 family. As to quaternary structure, interacts with sorf-1; the interaction is direct. Interacts with bec-1.

It localises to the early endosome. The protein localises to the late endosome. The protein resides in the cytoplasm. Functionally, together with sorf-1 negatively regulates the levels of phosphatidylinositol 3-phosphate (PtdIns3P) to enable the conversion of early endosomes to late endosomes. Binds to sorf-1 and the sorf-1-sorf-2 complex likely acts through bec-1, a non-catalytic subunit of phosphatidylinositol 3-kinase (PI3K), to suppress PI3K activity, thereby negatively regulating endosomal PtdIns3P levels. The protein is Suppressor of organelle fusion 2 of Caenorhabditis elegans.